Reading from the N-terminus, the 355-residue chain is Erythronate-4-phosphate dehydrogenase (355 aa).

Residues S45 and T66 each contribute to the substrate site. D146 serves as a coordination point for NAD(+). R206 is a catalytic residue. D229 provides a ligand contact to NAD(+). E234 is a catalytic residue. The active-site Proton donor is the H251. NAD(+) is bound at residue G254. Y255 contacts substrate.

Belongs to the D-isomer specific 2-hydroxyacid dehydrogenase family. PdxB subfamily. As to quaternary structure, homodimer.

Its subcellular location is the cytoplasm. The catalysed reaction is 4-phospho-D-erythronate + NAD(+) = (R)-3-hydroxy-2-oxo-4-phosphooxybutanoate + NADH + H(+). The protein operates within cofactor biosynthesis; pyridoxine 5'-phosphate biosynthesis; pyridoxine 5'-phosphate from D-erythrose 4-phosphate: step 2/5. Its function is as follows. Catalyzes the oxidation of erythronate-4-phosphate to 3-hydroxy-2-oxo-4-phosphonooxybutanoate. This is Erythronate-4-phosphate dehydrogenase from Acinetobacter baylyi (strain ATCC 33305 / BD413 / ADP1).